Reading from the N-terminus, the 297-residue chain is Bifunctional protein FolD 2 (297 aa).

NADP(+) is bound by residues 172–174, Thr199, and Val240; that span reads GRG.

It belongs to the tetrahydrofolate dehydrogenase/cyclohydrolase family. In terms of assembly, homodimer.

It catalyses the reaction (6R)-5,10-methylene-5,6,7,8-tetrahydrofolate + NADP(+) = (6R)-5,10-methenyltetrahydrofolate + NADPH. The catalysed reaction is (6R)-5,10-methenyltetrahydrofolate + H2O = (6R)-10-formyltetrahydrofolate + H(+). The protein operates within one-carbon metabolism; tetrahydrofolate interconversion. In terms of biological role, catalyzes the oxidation of 5,10-methylenetetrahydrofolate to 5,10-methenyltetrahydrofolate and then the hydrolysis of 5,10-methenyltetrahydrofolate to 10-formyltetrahydrofolate. The chain is Bifunctional protein FolD 2 from Paenarthrobacter aurescens (strain TC1).